A 537-amino-acid chain; its full sequence is Synaptotagmin-C (537 aa).

Residues 1–52 (MSGDGEDELCRNALALVNELCFSVRGNHNNEKCIEFSYLLRDRDRTRHIETD) lie on the Vesicular side of the membrane. The chain crosses the membrane as a helical span at residues 53 to 78 (ISVSLLSVIVTFCGIVLLGVSLFVSW). At 79–537 (KLCWIPWRDK…TIVVESPHSV (459 aa)) the chain is on the cytoplasmic side. Disordered stretches follow at residues 92–111 (PQRR…HHSH) and 142–200 (IKLS…EFGT). Residues 100 to 110 (HPHQHLHHHHS) show a composition bias toward basic residues. Residues 143 to 174 (KLSQTSPDIPVDTSSGSKENNIPNAHSQQQVS) show a composition bias toward polar residues. The segment at 228–477 (EAKKHQKVNC…VIGMCRVGNA (250 aa)) is phospholipid binding. C2 domains lie at 236–357 (NCGR…TIWR) and 368–501 (DLGE…EQWH). 11 residues coordinate Ca(2+): Asp-267, Asp-273, Asp-325, Phe-326, Asp-327, Ser-330, Asp-333, Asp-399, Asp-405, Asp-459, and Asp-461.

Belongs to the synaptotagmin family. As to quaternary structure, homodimer or homotrimer (possible). It depends on Ca(2+) as a cofactor.

The protein resides in the cytoplasmic vesicle. It is found in the secretory vesicle. Its subcellular location is the synaptic vesicle membrane. The protein localises to the synapse. Its function is as follows. May have a regulatory role in the membrane interactions during trafficking of synaptic vesicles at the active zone of the synapse. It binds acidic phospholipids with a specificity that requires the presence of both an acidic head group and a diacyl backbone. This chain is Synaptotagmin-C (P65-C), found in Diplobatis ommata (Ocellated electric ray).